We begin with the raw amino-acid sequence, 305 residues long: tRNA uridine(34) hydroxylase (305 aa).

The region spanning 125-219 (ADENTVVVDT…YLEEVPREDS (95 aa)) is the Rhodanese domain. The Cysteine persulfide intermediate role is filled by C179.

This sequence belongs to the TrhO family.

It carries out the reaction uridine(34) in tRNA + AH2 + O2 = 5-hydroxyuridine(34) in tRNA + A + H2O. Its function is as follows. Catalyzes oxygen-dependent 5-hydroxyuridine (ho5U) modification at position 34 in tRNAs. The sequence is that of tRNA uridine(34) hydroxylase from Brucella anthropi (strain ATCC 49188 / DSM 6882 / CCUG 24695 / JCM 21032 / LMG 3331 / NBRC 15819 / NCTC 12168 / Alc 37) (Ochrobactrum anthropi).